We begin with the raw amino-acid sequence, 314 residues long: Glycine--tRNA ligase alpha subunit (314 aa).

It belongs to the class-II aminoacyl-tRNA synthetase family. As to quaternary structure, tetramer of two alpha and two beta subunits.

The protein resides in the cytoplasm. The catalysed reaction is tRNA(Gly) + glycine + ATP = glycyl-tRNA(Gly) + AMP + diphosphate. The polypeptide is Glycine--tRNA ligase alpha subunit (Leuconostoc citreum (strain KM20)).